We begin with the raw amino-acid sequence, 447 residues long: DNA primase DnaG (447 aa).

Residues 200–274 (DSIIVVEGRA…DIDYVARAPE (75 aa)) form the Toprim domain. Positions 206, 248, and 250 each coordinate Mg(2+).

The protein belongs to the archaeal DnaG primase family. Forms a ternary complex with MCM helicase and DNA. Component of the archaeal exosome complex. The cofactor is Mg(2+).

It catalyses the reaction ssDNA + n NTP = ssDNA/pppN(pN)n-1 hybrid + (n-1) diphosphate.. RNA polymerase that catalyzes the synthesis of short RNA molecules used as primers for DNA polymerase during DNA replication. Also part of the exosome, which is a complex involved in RNA degradation. Acts as a poly(A)-binding protein that enhances the interaction between heteromeric, adenine-rich transcripts and the exosome. In Pyrococcus abyssi (strain GE5 / Orsay), this protein is DNA primase DnaG.